Reading from the N-terminus, the 455-residue chain is Mycosin-4 (455 aa).

Residues 1–25 (MTTSRTLRLLVVSALATLSGLGTPV) form the signal peptide. In terms of domain architecture, Peptidase S8 spans 74–384 (SAQLADLDQV…NGTVDALAAV (311 aa)). Residues aspartate 98, histidine 129, and serine 329 each act as charge relay system in the active site. The tract at residues 389–417 (IPQAGTATSDPAPVAVPVPRRSTPGPSDR) is disordered. The span at 394 to 412 (TATSDPAPVAVPVPRRSTP) shows a compositional bias: low complexity. Residues 432–452 (LALMATLATASRRLRPGRNGI) traverse the membrane as a helical segment.

Belongs to the peptidase S8 family.

It is found in the cell membrane. The sequence is that of Mycosin-4 from Mycobacterium tuberculosis (strain ATCC 25618 / H37Rv).